An 852-amino-acid polypeptide reads, in one-letter code: DNA mismatch repair protein MutS (852 aa).

602-609 lines the ATP pocket; it reads GPNMSGKS.

This sequence belongs to the DNA mismatch repair MutS family.

Functionally, this protein is involved in the repair of mismatches in DNA. It is possible that it carries out the mismatch recognition step. This protein has a weak ATPase activity. This is DNA mismatch repair protein MutS from Streptococcus thermophilus (strain ATCC BAA-491 / LMD-9).